The sequence spans 105 residues: Pyrimidine/purine nucleoside phosphorylase (105 aa).

The protein belongs to the nucleoside phosphorylase PpnP family.

It carries out the reaction a purine D-ribonucleoside + phosphate = a purine nucleobase + alpha-D-ribose 1-phosphate. The catalysed reaction is adenosine + phosphate = alpha-D-ribose 1-phosphate + adenine. The enzyme catalyses cytidine + phosphate = cytosine + alpha-D-ribose 1-phosphate. It catalyses the reaction guanosine + phosphate = alpha-D-ribose 1-phosphate + guanine. It carries out the reaction inosine + phosphate = alpha-D-ribose 1-phosphate + hypoxanthine. The catalysed reaction is thymidine + phosphate = 2-deoxy-alpha-D-ribose 1-phosphate + thymine. The enzyme catalyses uridine + phosphate = alpha-D-ribose 1-phosphate + uracil. It catalyses the reaction xanthosine + phosphate = alpha-D-ribose 1-phosphate + xanthine. Functionally, catalyzes the phosphorolysis of diverse nucleosides, yielding D-ribose 1-phosphate and the respective free bases. Can use uridine, adenosine, guanosine, cytidine, thymidine, inosine and xanthosine as substrates. Also catalyzes the reverse reactions. The protein is Pyrimidine/purine nucleoside phosphorylase of Albidiferax ferrireducens (strain ATCC BAA-621 / DSM 15236 / T118) (Rhodoferax ferrireducens).